A 289-amino-acid polypeptide reads, in one-letter code: MKLIILEHYSQASEWAAKYIRNRIIQFNPGPDKYFTMGLPTGSTPLGCYQKLIEYYKNGDLSFKYVKTFNMDEYVGLPREHPESYHSFMWNNFFKHIDIHPENTHILDGNAADLQAECDAFEEKIRAAGGIELFVGGIGPDGHVAFNEPGSSLVSRTRVKTLAMDTILANARFFDGDLAKVPTMALTVGVGTVMDAREVMILITGAHKAFALYKAIEEGVNHMWTVSAFQQHPRTVFVCDEDATLELKVKTVKYFKGLMLVHNKLVDPLYSIKEKEIQKSQAAKKPYSD.

Lys-64 carries the post-translational modification N6-acetyllysine. The Proton acceptor; for enolization step role is filled by Asp-72. Asp-141 functions as the For ring-opening step in the catalytic mechanism. His-143 (proton acceptor; for ring-opening step) is an active-site residue. The active-site For ring-opening step is the Glu-148. Position 161 is a phosphothreonine (Thr-161).

It belongs to the glucosamine/galactosamine-6-phosphate isomerase family. As to quaternary structure, homohexamer. At the equatorial segment of the sperm head.

Its subcellular location is the cytoplasm. It carries out the reaction alpha-D-glucosamine 6-phosphate + H2O = beta-D-fructose 6-phosphate + NH4(+). It functions in the pathway nucleotide-sugar biosynthesis; UDP-N-acetyl-alpha-D-glucosamine biosynthesis; alpha-D-glucosamine 6-phosphate from D-fructose 6-phosphate: step 1/1. Allosterically activated by N-acetylglucosamine-6-phosphate (GlcNAc6P). Functionally, catalyzes the reversible conversion of alpha-D-glucosamine 6-phosphate (GlcN-6P) into beta-D-fructose 6-phosphate (Fru-6P) and ammonium ion, a regulatory reaction step in de novo uridine diphosphate-N-acetyl-alpha-D-glucosamine (UDP-GlcNAc) biosynthesis via hexosamine pathway. Deamination is coupled to aldo-keto isomerization mediating the metabolic flux from UDP-GlcNAc toward Fru-6P. At high ammonium level can drive amination and isomerization of Fru-6P toward hexosamines and UDP-GlcNAc synthesis. Has a role in fine tuning the metabolic fluctuations of cytosolic UDP-GlcNAc and their effects on hyaluronan synthesis that occur during tissue remodeling. Seems to trigger calcium oscillations in mammalian eggs. These oscillations serve as the essential trigger for egg activation and early development of the embryo. This is Glucosamine-6-phosphate deaminase 1 from Mesocricetus auratus (Golden hamster).